Consider the following 264-residue polypeptide: NAD kinase 1 (264 aa).

Aspartate 45 (proton acceptor) is an active-site residue. NAD(+) is bound by residues 45–46 (DG), 122–123 (NE), arginine 148, aspartate 150, 161–166 (TAYNKS), and alanine 185.

This sequence belongs to the NAD kinase family. A divalent metal cation serves as cofactor.

It localises to the cytoplasm. It catalyses the reaction NAD(+) + ATP = ADP + NADP(+) + H(+). In terms of biological role, involved in the regulation of the intracellular balance of NAD and NADP, and is a key enzyme in the biosynthesis of NADP. Catalyzes specifically the phosphorylation on 2'-hydroxyl of the adenosine moiety of NAD to yield NADP. This chain is NAD kinase 1, found in Listeria innocua serovar 6a (strain ATCC BAA-680 / CLIP 11262).